The chain runs to 520 residues: ATP synthase subunit alpha (520 aa).

Residue 169–176 (GDRKTGKT) coordinates ATP.

Belongs to the ATPase alpha/beta chains family. F-type ATPases have 2 components, CF(1) - the catalytic core - and CF(0) - the membrane proton channel. CF(1) has five subunits: alpha(3), beta(3), gamma(1), delta(1), epsilon(1). CF(0) has three main subunits: a(1), b(2) and c(9-12). The alpha and beta chains form an alternating ring which encloses part of the gamma chain. CF(1) is attached to CF(0) by a central stalk formed by the gamma and epsilon chains, while a peripheral stalk is formed by the delta and b chains.

It is found in the cell membrane. It catalyses the reaction ATP + H2O + 4 H(+)(in) = ADP + phosphate + 5 H(+)(out). In terms of biological role, produces ATP from ADP in the presence of a proton gradient across the membrane. The alpha chain is a regulatory subunit. In Oenococcus oeni (strain ATCC BAA-331 / PSU-1), this protein is ATP synthase subunit alpha.